Reading from the N-terminus, the 109-residue chain is Oncomodulin (109 aa).

Residue S2 is modified to N-acetylserine. EF-hand domains follow at residues 39–74 (MSAS…FQSD) and 78–109 (LTES…MVHS). Residues D52, D54, S56, Y58, E63, D91, D93, D95, K97, and E102 each coordinate Ca(2+). Residues 82–109 (ETKSLMDAADNDGDGKIGADEFQEMVHS) are disordered. Basic and acidic residues predominate over residues 94 to 109 (GDGKIGADEFQEMVHS).

It belongs to the parvalbumin family. As to expression, found in tumor tissues and not detected in normal tissues.

Has some calmodulin-like activity with respect to enzyme activation and growth regulation. Binds two calcium ions. The sequence is that of Oncomodulin (Ocm) from Mus musculus (Mouse).